We begin with the raw amino-acid sequence, 296 residues long: Diheme cytochrome c-type (296 aa).

Cys52, Cys55, His56, Cys202, Cys205, and His206 together coordinate heme c.

In terms of processing, binds 2 heme c groups covalently per subunit.

The protein resides in the cell membrane. In terms of biological role, particularly expressed when cells generate energy via aerobic respiration. The sequence is that of Diheme cytochrome c-type (cycG) from Cereibacter sphaeroides (strain ATCC 17023 / DSM 158 / JCM 6121 / CCUG 31486 / LMG 2827 / NBRC 12203 / NCIMB 8253 / ATH 2.4.1.) (Rhodobacter sphaeroides).